The chain runs to 146 residues: uncharacterized protein (146 aa).

In terms of domain architecture, N-acetyltransferase spans 7–146 (LQINYKTDEL…EGHDILIWNP (140 aa)).

This is an uncharacterized protein from Staphylococcus epidermidis (strain ATCC 35984 / DSM 28319 / BCRC 17069 / CCUG 31568 / BM 3577 / RP62A).